Here is a 212-residue protein sequence, read N- to C-terminus: Transmembrane protein 186 (212 aa).

Residues 1–78 (MAAVLRAVAR…YLSRLKVAQT (78 aa)) lie on the Mitochondrial matrix side of the membrane. A helical membrane pass occupies residues 79–99 (ALTVAALPPGLYCYSQGLMPF). Residues 100-101 (SS) lie on the Mitochondrial intermembrane side of the membrane. The helical transmembrane segment at 102 to 122 (LCLAGGVAGFALAMLCWMSHF) threads the bilayer. Residues 123–212 (FRRLVGILYV…QVFGVLDALK (90 aa)) lie on the Mitochondrial matrix side of the membrane.

It belongs to the TMEM186 family. Part of the mitochondrial complex I assembly/MCIA complex that comprises at least the core subunits TMEM126B, NDUFAF1, ECSIT and ACAD9 and complement subunits such as COA1 and TMEM186. Interacts with MT-ND3.

Its subcellular location is the mitochondrion inner membrane. As part of the MCIA complex, required for efficient assembly of the mitochondrial complex I. The chain is Transmembrane protein 186 from Bos taurus (Bovine).